A 515-amino-acid chain; its full sequence is Fc receptor-like protein 4 (515 aa).

A signal peptide spans 1–19; that stretch reads MLLWASLLAFAPVCGQSAA. The Extracellular portion of the chain corresponds to 20–387; the sequence is AHKPVISVHP…RETPGNRDGL (368 aa). Ig-like C2-type domains lie at 23-97, 102-183, 193-271, and 275-374; these read PVIS…NPVR, SDSL…NFKI, PELK…GNIH, and PSLQ…MVLN. 4 disulfides stabilise this stretch: C44/C85, C123/C167, C212/C261, and C310/C359. The N-linked (GlcNAc...) asparagine glycan is linked to N374. Residues 388-408 form a helical membrane-spanning segment; the sequence is VAAGATGGLLSALLLAVALLF. At 409–515 the chain is on the cytoplasmic side; the sequence is HCWRRRKSGV…GKISSKDEES (107 aa). 3 short sequence motifs (ITIM motif) span residues 449 to 454, 461 to 466, and 491 to 496; these read SLYVDV, LVYSEI, and VVYSEV. The segment at 494–515 is disordered; it reads SEVKTQHPDNSAGKISSKDEES.

Interacts with PTPN6 and PTPN11. In terms of processing, phosphorylated on cytoplasmic tyrosines upon activation. As to expression, specifically expressed by memory and monocytoid B-cells which populate spleen and lymph nodes. Preferentially expressed in memory B-cells associated with mucosal tissue (at protein level).

The protein resides in the cell membrane. In terms of biological role, may function as an inhibitor of the B-cell receptor signaling. May function in the B-cell-mediated immune response. The sequence is that of Fc receptor-like protein 4 (FCRL4) from Homo sapiens (Human).